The following is a 525-amino-acid chain: Cytochrome P450 4V2 (525 aa).

Residues 14–34 (LLWGAASAVSLAGATILISIF) form a helical membrane-spanning segment. 2 residues coordinate heme: Glu329 and Cys467.

This sequence belongs to the cytochrome P450 family. Requires heme as cofactor.

The protein localises to the endoplasmic reticulum membrane. It carries out the reaction dodecanoate + reduced [NADPH--hemoprotein reductase] + O2 = 12-hydroxydodecanoate + oxidized [NADPH--hemoprotein reductase] + H2O + H(+). It catalyses the reaction tetradecanoate + reduced [NADPH--hemoprotein reductase] + O2 = 14-hydroxytetradecanoate + oxidized [NADPH--hemoprotein reductase] + H2O + H(+). The enzyme catalyses hexadecanoate + reduced [NADPH--hemoprotein reductase] + O2 = 16-hydroxyhexadecanoate + oxidized [NADPH--hemoprotein reductase] + H2O + H(+). The catalysed reaction is (5Z,8Z,11Z,14Z,17Z)-eicosapentaenoate + reduced [NADPH--hemoprotein reductase] + O2 = 20-hydroxy-(5Z,8Z,11Z,14Z,17Z)-eicosapentaenoate + oxidized [NADPH--hemoprotein reductase] + H2O + H(+). It carries out the reaction (4Z,7Z,10Z,13Z,16Z,19Z)-docosahexaenoate + reduced [NADPH--hemoprotein reductase] + O2 = 22-hydroxy-(4Z,7Z,10Z,13Z,16Z,19Z)-docosahexaenoate + oxidized [NADPH--hemoprotein reductase] + H2O + H(+). It functions in the pathway lipid metabolism; fatty acid metabolism. Inhibited by N-hydroxy-N'-(4-n-butyl-2-methylphenyl formamidine)(HET0016) with an IC(50) of 38 nM. A cytochrome P450 monooxygenase involved in fatty acid metabolism in the eye. Catalyzes the omega-hydroxylation of polyunsaturated fatty acids (PUFAs) docosahexaenoate (DHA) and its precursor eicosapentaenoate (EPA), and may contribute to the homeostasis of these retinal PUFAs. Omega hydroxylates saturated fatty acids such as laurate, myristate and palmitate, the catalytic efficiency decreasing in the following order: myristate &gt; laurate &gt; palmitate (C14&gt;C12&gt;C16). Mechanistically, uses molecular oxygen inserting one oxygen atom into a substrate, and reducing the second into a water molecule, with two electrons provided by NADPH via cytochrome P450 reductase (CPR; NADPH-ferrihemoprotein reductase). The chain is Cytochrome P450 4V2 (Cyp4v2) from Mus musculus (Mouse).